Here is a 117-residue protein sequence, read N- to C-terminus: Immunoglobulin heavy variable 3-11 (117 aa).

The signal sequence occupies residues Met-1–Cys-19. Residue Gln-20 is modified to Pyrrolidone carboxylic acid. Residues Gln-20–Ser-44 are framework-1. The region spanning Gln-20 to Arg-117 is the Ig-like domain. Cys-41 and Cys-115 are joined by a disulfide. Residues Gly-45–Tyr-52 are complementarity-determining-1. The framework-2 stretch occupies residues Met-53–Tyr-69. A complementarity-determining-2 region spans residues Ile-70–Thr-77. Residues Asn-78 to Cys-115 form a framework-3 region. The segment at Ala-116–Arg-117 is complementarity-determining-3.

Immunoglobulins are composed of two identical heavy chains and two identical light chains; disulfide-linked.

The protein resides in the secreted. It localises to the cell membrane. In terms of biological role, v region of the variable domain of immunoglobulin heavy chains that participates in the antigen recognition. Immunoglobulins, also known as antibodies, are membrane-bound or secreted glycoproteins produced by B lymphocytes. In the recognition phase of humoral immunity, the membrane-bound immunoglobulins serve as receptors which, upon binding of a specific antigen, trigger the clonal expansion and differentiation of B lymphocytes into immunoglobulins-secreting plasma cells. Secreted immunoglobulins mediate the effector phase of humoral immunity, which results in the elimination of bound antigens. The antigen binding site is formed by the variable domain of one heavy chain, together with that of its associated light chain. Thus, each immunoglobulin has two antigen binding sites with remarkable affinity for a particular antigen. The variable domains are assembled by a process called V-(D)-J rearrangement and can then be subjected to somatic hypermutations which, after exposure to antigen and selection, allow affinity maturation for a particular antigen. The chain is Immunoglobulin heavy variable 3-11 from Homo sapiens (Human).